Here is a 182-residue protein sequence, read N- to C-terminus: uncharacterized protein (182 aa).

2 helical membrane passes run 29-49 (IISG…AGLP) and 63-83 (FYFP…MLTL).

It is found in the cell membrane. This is an uncharacterized protein from Ureaplasma parvum serovar 3 (strain ATCC 700970).